The primary structure comprises 289 residues: Metal-staphylopine import system permease protein CntC (289 aa).

Helical transmembrane passes span alanine 13–valine 33, leucine 77–leucine 97, valine 115–glycine 135, isoleucine 194–phenylalanine 214, and isoleucine 249–isoleucine 269. Residues isoleucine 73 to serine 262 form the ABC transmembrane type-1 domain.

This sequence belongs to the binding-protein-dependent transport system permease family. The complex is composed of two ATP-binding proteins (CntD and CntF), two transmembrane proteins (CntB and CntC) and a solute-binding protein (CntA).

It is found in the cell membrane. Nickel/cobalt import is reduced in the presence of zinc. Its function is as follows. Part of the ABC transporter complex CntABCDF (Opp1) involved in the uptake of metal in complex with the metallophore staphylopine (StP). Involved in the import of divalent metals ions such as nickel, cobalt and zinc. Probably responsible for the translocation of the substrate across the membrane. Plays a major role in nickel/cobalt import in zinc-depleted conditions. Contributes to virulence. Required for full urease activity in vitro. The chain is Metal-staphylopine import system permease protein CntC from Staphylococcus aureus (strain NCTC 8325 / PS 47).